Here is a 90-residue protein sequence, read N- to C-terminus: Small ribosomal subunit protein bS18 (90 aa).

Belongs to the bacterial ribosomal protein bS18 family. Part of the 30S ribosomal subunit. Forms a tight heterodimer with protein bS6.

In terms of biological role, binds as a heterodimer with protein bS6 to the central domain of the 16S rRNA, where it helps stabilize the platform of the 30S subunit. This chain is Small ribosomal subunit protein bS18, found in Bordetella petrii (strain ATCC BAA-461 / DSM 12804 / CCUG 43448).